Here is a 466-residue protein sequence, read N- to C-terminus: Purple acid phosphatase 6 (466 aa).

Positions 1–20 (MKNLVIFAFLFLSITTVING) are cleaved as a signal peptide. N88 is a glycosylation site (N-linked (GlcNAc...) asparagine). D164 is a Fe cation binding site. N172 carries an N-linked (GlcNAc...) asparagine glycan. Fe cation contacts are provided by D192 and Y195. A Zn(2+)-binding site is contributed by D192. 2 residues coordinate Zn(2+): N229 and H314. Position 229 (N229) interacts with substrate. H324 functions as the Proton donor in the catalytic mechanism. H351 contacts Zn(2+). 351–353 (HVH) lines the substrate pocket. H353 contacts Fe cation. N-linked (GlcNAc...) asparagine glycans are attached at residues N367 and N424.

Belongs to the metallophosphoesterase superfamily. Purple acid phosphatase family. In terms of assembly, homodimer. It depends on Fe cation as a cofactor. Zn(2+) serves as cofactor. As to expression, specifically expressed in flowers.

It localises to the secreted. It catalyses the reaction a phosphate monoester + H2O = an alcohol + phosphate. The polypeptide is Purple acid phosphatase 6 (PAP6) (Arabidopsis thaliana (Mouse-ear cress)).